The chain runs to 860 residues: Alanine--tRNA ligase (860 aa).

The Zn(2+) site is built by histidine 563, histidine 567, cysteine 665, and histidine 669. The disordered stretch occupies residues 824-843; that stretch reads VGGKGGGRPDMAQAGGTDSS.

This sequence belongs to the class-II aminoacyl-tRNA synthetase family. Requires Zn(2+) as cofactor.

The protein resides in the cytoplasm. It carries out the reaction tRNA(Ala) + L-alanine + ATP = L-alanyl-tRNA(Ala) + AMP + diphosphate. Its function is as follows. Catalyzes the attachment of alanine to tRNA(Ala) in a two-step reaction: alanine is first activated by ATP to form Ala-AMP and then transferred to the acceptor end of tRNA(Ala). Also edits incorrectly charged Ser-tRNA(Ala) and Gly-tRNA(Ala) via its editing domain. The chain is Alanine--tRNA ligase from Vibrio vulnificus (strain YJ016).